The sequence spans 199 residues: ATP-dependent Clp protease proteolytic subunit 2 (199 aa).

The Nucleophile role is filled by Ser95. His120 is an active-site residue.

The protein belongs to the peptidase S14 family. Fourteen ClpP subunits assemble into 2 heptameric rings which stack back to back to give a disk-like structure with a central cavity, resembling the structure of eukaryotic proteasomes.

It localises to the cytoplasm. It carries out the reaction Hydrolysis of proteins to small peptides in the presence of ATP and magnesium. alpha-casein is the usual test substrate. In the absence of ATP, only oligopeptides shorter than five residues are hydrolyzed (such as succinyl-Leu-Tyr-|-NHMec, and Leu-Tyr-Leu-|-Tyr-Trp, in which cleavage of the -Tyr-|-Leu- and -Tyr-|-Trp bonds also occurs).. Cleaves peptides in various proteins in a process that requires ATP hydrolysis. Has a chymotrypsin-like activity. Plays a major role in the degradation of misfolded proteins. The sequence is that of ATP-dependent Clp protease proteolytic subunit 2 from Mycolicibacterium paratuberculosis (strain ATCC BAA-968 / K-10) (Mycobacterium paratuberculosis).